The primary structure comprises 378 residues: C-type lectin domain family 17, member A (378 aa).

The disordered stretch occupies residues 1–119 (MHNLYSITGY…PPLPCKPRNM (119 aa)). Residues 1–172 (MHNLYSITGY…GCCQKRWMVY (172 aa)) are Cytoplasmic-facing. Acidic residues-rich tracts occupy residues 17 to 27 (MEEEEEDDDYE), 43 to 53 (MEEEEEDDDYE), and 69 to 79 (MEEEEEDDDYE). The segment covering 86–101 (KDLPPKPGSSAPPRPP) has biased composition (pro residues). Residues 173 to 193 (LCLLVVTSLFLGCLGLTVTLI) form a helical; Signal-anchor for type II membrane protein membrane-spanning segment. Residues 194 to 378 (KYQELMEELR…YWICERKCSC (185 aa)) lie on the Extracellular side of the membrane. 2 N-linked (GlcNAc...) asparagine glycosylation sites follow: N215 and N237. Disulfide bonds link C254–C265, C282–C372, and C350–C364. Positions 261-373 (FEGKCYYFSP…CYKTTYWICE (113 aa)) constitute a C-type lectin domain. The N-linked (GlcNAc...) asparagine glycan is linked to N285. The Ca(2+) site is built by E341, N343, E348, N360, and D361.

As to quaternary structure, oligomer; disulfide-linked. In terms of processing, phosphorylated on tyrosine residues. Expressed on dividing B-cells of germinal centers in various tissues, including lymph nodes, tonsils, stomach, intestine, appendix and spleen.

The protein resides in the membrane. In terms of biological role, cell surface receptor which may be involved in carbohydrate-mediated communication between cells in the germinal center. Binds glycans with terminal alpha-linked mannose or fucose residues. The protein is C-type lectin domain family 17, member A (CLEC17A) of Homo sapiens (Human).